Here is a 500-residue protein sequence, read N- to C-terminus: Probable transcription factor FPSE_09189 (500 aa).

Disordered stretches follow at residues 161–197 and 457–500; these read MVRH…PSLA and IRTG…TQLE. Basic and acidic residues predominate over residues 459–474; sequence TGHEDSSRDGGRENKA. Over residues 475 to 484 the composition is skewed to polar residues; that stretch reads MNRNRSTGNS.

The protein resides in the nucleus. The two putative transcription factors FPSE_09188 and FPSE_09189 could be responsible for orchestrating expression of the W493 A and B biosynthesis cluster genes. W493 A and B consist of six amino acid residues D-allo-thr, L-Ala, D-Ala, L-Gln, D-Tyr, and L-Val/L-Ile linked to a 3-hydroxy-4-methyltetradecanoic acid polyketide chain. The protein is Probable transcription factor FPSE_09189 of Fusarium pseudograminearum (strain CS3096) (Wheat and barley crown-rot fungus).